A 360-amino-acid chain; its full sequence is Phospho-N-acetylmuramoyl-pentapeptide-transferase (360 aa).

10 consecutive transmembrane segments (helical) span residues 21–41 (YITFRAIMALLTAMGIGLWIG), 73–93 (TMGGIMILIAIGVSTLLWADL), 98–118 (VWFVLFVLFGYGAVGFVDDYW), 132–152 (WKYFWLSVIALIAVFGIYAVG), 168–188 (FMPQLGIFFIILSYFVIVGTS), 199–219 (GLAIVPTIMVASAFALIAWAT), 236–256 (AGELVILCTAIVGAGLGFLWY), 263–283 (VFMGDVGSLSLGGALGTIAVL), 288–308 (LLLVIMGGVFVVEALSVILQV), and 338–358 (VIVRFWIITLMLVLIGLVTLK).

This sequence belongs to the glycosyltransferase 4 family. MraY subfamily. Requires Mg(2+) as cofactor.

Its subcellular location is the cell inner membrane. The enzyme catalyses UDP-N-acetyl-alpha-D-muramoyl-L-alanyl-gamma-D-glutamyl-meso-2,6-diaminopimeloyl-D-alanyl-D-alanine + di-trans,octa-cis-undecaprenyl phosphate = di-trans,octa-cis-undecaprenyl diphospho-N-acetyl-alpha-D-muramoyl-L-alanyl-D-glutamyl-meso-2,6-diaminopimeloyl-D-alanyl-D-alanine + UMP. It functions in the pathway cell wall biogenesis; peptidoglycan biosynthesis. Its function is as follows. Catalyzes the initial step of the lipid cycle reactions in the biosynthesis of the cell wall peptidoglycan: transfers peptidoglycan precursor phospho-MurNAc-pentapeptide from UDP-MurNAc-pentapeptide onto the lipid carrier undecaprenyl phosphate, yielding undecaprenyl-pyrophosphoryl-MurNAc-pentapeptide, known as lipid I. The chain is Phospho-N-acetylmuramoyl-pentapeptide-transferase from Actinobacillus pleuropneumoniae serotype 3 (strain JL03).